The primary structure comprises 244 residues: Glucosamine-6-phosphate deaminase (244 aa).

Catalysis depends on Asp67, which acts as the Proton acceptor; for enolization step. Residue Asn136 is the For ring-opening step of the active site. The active-site Proton acceptor; for ring-opening step is His138. Glu143 serves as the catalytic For ring-opening step.

Belongs to the glucosamine/galactosamine-6-phosphate isomerase family. NagB subfamily.

It catalyses the reaction alpha-D-glucosamine 6-phosphate + H2O = beta-D-fructose 6-phosphate + NH4(+). It functions in the pathway amino-sugar metabolism; N-acetylneuraminate degradation; D-fructose 6-phosphate from N-acetylneuraminate: step 5/5. In terms of biological role, catalyzes the reversible isomerization-deamination of glucosamine 6-phosphate (GlcN6P) to form fructose 6-phosphate (Fru6P) and ammonium ion. The sequence is that of Glucosamine-6-phosphate deaminase from Clostridium botulinum (strain Okra / Type B1).